The primary structure comprises 833 residues: ERAD-associated E3 ubiquitin-protein ligase component HRD3 (833 aa).

The N-terminal stretch at 1-20 is a signal peptide; sequence MITLLLYLCVICNAIVLIRA. Residues asparagine 101, asparagine 123, and asparagine 142 are each glycosylated (N-linked (GlcNAc...) asparagine). The stretch at 103–139 is one Sel1-like 1 repeat; that stretch reads SEATYTLSQIHLWSQYNFPHNMTLAHKYLEKFNDLTH. 6 Sel1-like repeats span residues 143 to 186, 187 to 222, 413 to 445, 552 to 595, 596 to 627, and 628 to 663; these read HSAI…QLGN, LKAK…EQLR, GRAC…KTQA, ETAQ…KQGN, IDAG…LKYS, and IQAI…EHDH. N-linked (GlcNAc...) asparagine glycosylation occurs at asparagine 429. Asparagine 611 carries an N-linked (GlcNAc...) asparagine glycan. A helical membrane pass occupies residues 768–788; the sequence is LVTMGCILGIFLLSILMSTLA. The segment at 805 to 824 is disordered; it reads NGNRQQEQQQQQQAQGPPGW. Residues 809–819 are compositionally biased toward low complexity; it reads QQEQQQQQQAQ.

The protein belongs to the sel-1 family. As to quaternary structure, component of the HRD1 ubiquitin ligase complex which contains the E3 ligase HRD1, its cofactors HRD3, USA1 and DER1, substrate recruiting factor YOS9 and CDC48-binding protein UBX2. Within the complex, interacts directly with HRD1 and YOS9 (via N-terminus). In ERAD-L, HRD3 and YOS9 jointly bind misfolded glycoproteins in the endoplasmic reticulum (ER) lumen. Movement of ERAD-L substrates through the ER membrane is facilitated by HRD1 and DER1 which have lateral gates facing each other and which distort the membrane region between the lateral gates, making it much thinner than a normal phospholipid bilayer. Substrates insert into the membrane as a hairpin loop with one strand interacting with DER1 and the other with HRD1. The HRD1 complex interacts with the heterotrimeric CDC48-NPL4-UFD1 ATPase complex which is recruited by UBX2 via its interaction with CDC48 and which moves ubiquitinated substrates to the cytosol for targeting to the proteasome. The HRD1 complex interacts with the ERAD substrates HMG1 and HMG2. Interacts with KAR2.

The protein resides in the endoplasmic reticulum membrane. In terms of biological role, component of the endoplasmic reticulum quality control (ERQC) system involved in ubiquitin-dependent degradation of misfolded endoplasmic reticulum proteins. Component of the HRD1 ubiquitin ligase complex, which is part of the ERAD-L and ERAD-M pathways responsible for the rapid degradation of soluble lumenal and membrane proteins with misfolded lumenal domains (ERAD-L), or ER-membrane proteins with misfolded transmembrane domains (ERAD-M). ERAD-L substrates are ubiquitinated through HRD1 in conjunction with the E2 ubiquitin-conjugating enzymes UBC1 and UBC7-CUE1. Ubiquitinated substrates are then removed to the cytosol via the action of the CDC48-NPL4-UFD1 ATPase complex and targeted to the proteasome. ERAD-M substrates are processed by the same HRD1-HRD3 core complex, but only a subset of the other components is required for ERAD-M. Stabilizes the HRD1 ubiquitin-protein ligase. Also functions in recruiting misfolded protein substrates in conjunction with YOS9. The polypeptide is ERAD-associated E3 ubiquitin-protein ligase component HRD3 (HRD3) (Saccharomyces cerevisiae (strain ATCC 204508 / S288c) (Baker's yeast)).